We begin with the raw amino-acid sequence, 450 residues long: Tubulin beta-6 chain (450 aa).

GTP is bound by residues Gln11, Glu71, Ser140, Gly144, Thr145, Gly146, Asn206, and Asn228. Position 71 (Glu71) interacts with Mg(2+). Residues 429–450 form a disordered region; that stretch reads DATVEDEEEYEGEEGLDENYET. Residues 431–450 are compositionally biased toward acidic residues; sequence TVEDEEEYEGEEGLDENYET.

Belongs to the tubulin family. Dimer of alpha and beta chains. A typical microtubule is a hollow water-filled tube with an outer diameter of 25 nm and an inner diameter of 15 nM. Alpha-beta heterodimers associate head-to-tail to form protofilaments running lengthwise along the microtubule wall with the beta-tubulin subunit facing the microtubule plus end conferring a structural polarity. Microtubules usually have 13 protofilaments but different protofilament numbers can be found in some organisms and specialized cells. Mg(2+) is required as a cofactor.

Its subcellular location is the cytoplasm. It localises to the cytoskeleton. Functionally, tubulin is the major constituent of microtubules, a cylinder consisting of laterally associated linear protofilaments composed of alpha- and beta-tubulin heterodimers. Microtubules grow by the addition of GTP-tubulin dimers to the microtubule end, where a stabilizing cap forms. Below the cap, tubulin dimers are in GDP-bound state, owing to GTPase activity of alpha-tubulin. The polypeptide is Tubulin beta-6 chain (Gossypium hirsutum (Upland cotton)).